The sequence spans 363 residues: Lactose transport ATP-binding protein LacK (363 aa).

Residues 4–234 enclose the ABC transporter domain; the sequence is VRLTDIRKSY…PDNMFVAGFI (231 aa). 36 to 43 is a binding site for ATP; that stretch reads GPSGCGKS.

The protein belongs to the ABC transporter superfamily.

The protein localises to the cell inner membrane. In terms of biological role, part of the binding-protein-dependent transport system for lactose. Probably responsible for energy coupling to the transport system. The protein is Lactose transport ATP-binding protein LacK (lacK) of Rhizobium radiobacter (Agrobacterium tumefaciens).